The sequence spans 191 residues: Ankyrin repeat domain-containing protein 22 (191 aa).

4 ANK repeats span residues 39 to 68 (NGDTPLICACRRGHVRIVSFLLRRNANVNL), 72 to 100 (KERTCLHYAVKKKFTFIDYLLIILLMPVL), 101 to 130 (LIGYFLMVSKTKQNEALVRMLLDAGVEVNA), and 134 to 163 (YGCTALHYACEMKNQSLIPLLLEARADPTI).

In Homo sapiens (Human), this protein is Ankyrin repeat domain-containing protein 22 (ANKRD22).